The primary structure comprises 143 residues: Histone H2A.z (143 aa).

The protein belongs to the histone H2A family. The nucleosome is a histone octamer containing two molecules each of H2A, H2B, H3 and H4 assembled in one H3-H4 heterotetramer and two H2A-H2B heterodimers. The octamer wraps approximately 147 bp of DNA.

The protein localises to the nucleus. The protein resides in the chromosome. Core component of nucleosome which plays a central role in DNA double strand break (DSB) repair. Nucleosomes wrap and compact DNA into chromatin, limiting DNA accessibility to the cellular machineries which require DNA as a template. Histones thereby play a central role in transcription regulation, DNA repair, DNA replication and chromosomal stability. DNA accessibility is regulated via a complex set of post-translational modifications of histones, also called histone code, and nucleosome remodeling. This is Histone H2A.z (H2AZ) from Dictyostelium discoideum (Social amoeba).